A 328-amino-acid polypeptide reads, in one-letter code: Malate dehydrogenase (328 aa).

NAD(+) is bound at residue 12 to 18 (GAAGQIA). Residues arginine 93 and arginine 99 each contribute to the substrate site. Residues asparagine 106, glutamine 113, and 130-132 (VGN) each bind NAD(+). The substrate site is built by asparagine 132 and arginine 163. Histidine 188 functions as the Proton acceptor in the catalytic mechanism.

Belongs to the LDH/MDH superfamily. MDH type 2 family.

It catalyses the reaction (S)-malate + NAD(+) = oxaloacetate + NADH + H(+). In terms of biological role, catalyzes the reversible oxidation of malate to oxaloacetate. In Burkholderia ambifaria (strain ATCC BAA-244 / DSM 16087 / CCUG 44356 / LMG 19182 / AMMD) (Burkholderia cepacia (strain AMMD)), this protein is Malate dehydrogenase.